Reading from the N-terminus, the 158-residue chain is SsrA-binding protein (158 aa).

The protein belongs to the SmpB family.

It localises to the cytoplasm. Functionally, required for rescue of stalled ribosomes mediated by trans-translation. Binds to transfer-messenger RNA (tmRNA), required for stable association of tmRNA with ribosomes. tmRNA and SmpB together mimic tRNA shape, replacing the anticodon stem-loop with SmpB. tmRNA is encoded by the ssrA gene; the 2 termini fold to resemble tRNA(Ala) and it encodes a 'tag peptide', a short internal open reading frame. During trans-translation Ala-aminoacylated tmRNA acts like a tRNA, entering the A-site of stalled ribosomes, displacing the stalled mRNA. The ribosome then switches to translate the ORF on the tmRNA; the nascent peptide is terminated with the 'tag peptide' encoded by the tmRNA and targeted for degradation. The ribosome is freed to recommence translation, which seems to be the essential function of trans-translation. The chain is SsrA-binding protein from Bartonella tribocorum (strain CIP 105476 / IBS 506).